We begin with the raw amino-acid sequence, 91 residues long: MARSIKKGPFVDAHLMKKVLSANSANDKKPIKTWSRRSTVLPEMIGITFNVHNGRNFVPVLITENHVGYKLGEFAPTRTFKGHKGSVQRKA.

It belongs to the universal ribosomal protein uS19 family.

Protein S19 forms a complex with S13 that binds strongly to the 16S ribosomal RNA. The protein is Small ribosomal subunit protein uS19 of Aliarcobacter butzleri (strain RM4018) (Arcobacter butzleri).